The primary structure comprises 222 residues: ATP-dependent Clp protease proteolytic subunit 1 (222 aa).

Serine 121 acts as the Nucleophile in catalysis. The active site involves histidine 146.

Belongs to the peptidase S14 family. As to quaternary structure, fourteen ClpP subunits assemble into 2 heptameric rings which stack back to back to give a disk-like structure with a central cavity, resembling the structure of eukaryotic proteasomes.

It is found in the cytoplasm. It carries out the reaction Hydrolysis of proteins to small peptides in the presence of ATP and magnesium. alpha-casein is the usual test substrate. In the absence of ATP, only oligopeptides shorter than five residues are hydrolyzed (such as succinyl-Leu-Tyr-|-NHMec, and Leu-Tyr-Leu-|-Tyr-Trp, in which cleavage of the -Tyr-|-Leu- and -Tyr-|-Trp bonds also occurs).. Functionally, cleaves peptides in various proteins in a process that requires ATP hydrolysis. Has a chymotrypsin-like activity. Plays a major role in the degradation of misfolded proteins. The polypeptide is ATP-dependent Clp protease proteolytic subunit 1 (Thermobifida fusca (strain YX)).